The sequence spans 356 residues: S-adenosylmethionine:tRNA ribosyltransferase-isomerase (356 aa).

This sequence belongs to the QueA family. As to quaternary structure, monomer.

It localises to the cytoplasm. It carries out the reaction 7-aminomethyl-7-carbaguanosine(34) in tRNA + S-adenosyl-L-methionine = epoxyqueuosine(34) in tRNA + adenine + L-methionine + 2 H(+). It functions in the pathway tRNA modification; tRNA-queuosine biosynthesis. In terms of biological role, transfers and isomerizes the ribose moiety from AdoMet to the 7-aminomethyl group of 7-deazaguanine (preQ1-tRNA) to give epoxyqueuosine (oQ-tRNA). This is S-adenosylmethionine:tRNA ribosyltransferase-isomerase from Escherichia coli O6:K15:H31 (strain 536 / UPEC).